Consider the following 175-residue polypeptide: Transcription factor E (175 aa).

Positions 8–90 (NDPVIQKYLH…LWTFQYENIP (83 aa)) constitute an HTH TFE/IIEalpha-type domain.

It belongs to the TFE family. As to quaternary structure, monomer. Interaction with RNA polymerase subunits RpoF and RpoE is necessary for Tfe stimulatory transcription activity. Able to interact with Tbp and RNA polymerase in the absence of DNA promoter. Interacts both with the preinitiation and elongation complexes.

Transcription factor that plays a role in the activation of archaeal genes transcribed by RNA polymerase. Facilitates transcription initiation by enhancing TATA-box recognition by TATA-box-binding protein (Tbp), and transcription factor B (Tfb) and RNA polymerase recruitment. Not absolutely required for transcription in vitro, but particularly important in cases where Tbp or Tfb function is not optimal. It dynamically alters the nucleic acid-binding properties of RNA polymerases by stabilizing the initiation complex and destabilizing elongation complexes. Seems to translocate with the RNA polymerase following initiation and acts by binding to the non template strand of the transcription bubble in elongation complexes. The polypeptide is Transcription factor E (Natronomonas pharaonis (strain ATCC 35678 / DSM 2160 / CIP 103997 / JCM 8858 / NBRC 14720 / NCIMB 2260 / Gabara) (Halobacterium pharaonis)).